We begin with the raw amino-acid sequence, 250 residues long: tRNA (guanine-N(7)-)-methyltransferase (250 aa).

S-adenosyl-L-methionine is bound by residues glutamate 79, glutamate 104, aspartate 131, and aspartate 154. The active site involves aspartate 154. Residues lysine 158, aspartate 190, and threonine 228–glutamate 231 each bind substrate.

It belongs to the class I-like SAM-binding methyltransferase superfamily. TrmB family.

It catalyses the reaction guanosine(46) in tRNA + S-adenosyl-L-methionine = N(7)-methylguanosine(46) in tRNA + S-adenosyl-L-homocysteine. The protein operates within tRNA modification; N(7)-methylguanine-tRNA biosynthesis. In terms of biological role, catalyzes the formation of N(7)-methylguanine at position 46 (m7G46) in tRNA. The chain is tRNA (guanine-N(7)-)-methyltransferase from Actinobacillus pleuropneumoniae serotype 5b (strain L20).